The primary structure comprises 525 residues: Acetyl-CoA hydrolase (525 aa).

Residue 280–284 (GIGNI) participates in CoA binding. E305 serves as the catalytic 5-glutamyl coenzyme A thioester intermediate. N395 and G399 together coordinate CoA.

It belongs to the acetyl-CoA hydrolase/transferase family.

The protein localises to the cytoplasm. The catalysed reaction is acetyl-CoA + H2O = acetate + CoA + H(+). Functionally, required for utilization of acetate. In Neurospora crassa (strain ATCC 24698 / 74-OR23-1A / CBS 708.71 / DSM 1257 / FGSC 987), this protein is Acetyl-CoA hydrolase (acu-8).